Here is a 227-residue protein sequence, read N- to C-terminus: Cytidylate kinase (227 aa).

Position 12–20 (12–20 (GPSGAGKGT)) interacts with ATP.

The protein belongs to the cytidylate kinase family. Type 1 subfamily.

Its subcellular location is the cytoplasm. The catalysed reaction is CMP + ATP = CDP + ADP. It carries out the reaction dCMP + ATP = dCDP + ADP. This Enterobacter sp. (strain 638) protein is Cytidylate kinase.